The primary structure comprises 1368 residues: DNA-directed RNA polymerase subunit beta (1368 aa).

It belongs to the RNA polymerase beta chain family. The RNAP catalytic core consists of 2 alpha, 1 beta, 1 beta' and 1 omega subunit. When a sigma factor is associated with the core the holoenzyme is formed, which can initiate transcription.

The catalysed reaction is RNA(n) + a ribonucleoside 5'-triphosphate = RNA(n+1) + diphosphate. Its function is as follows. DNA-dependent RNA polymerase catalyzes the transcription of DNA into RNA using the four ribonucleoside triphosphates as substrates. The chain is DNA-directed RNA polymerase subunit beta from Ralstonia pickettii (strain 12J).